The sequence spans 346 residues: Methylthioribose-1-phosphate isomerase (346 aa).

Substrate contacts are provided by residues 46-48 (RGA), arginine 89, and glutamine 196. Aspartate 237 serves as the catalytic Proton donor. Residue 247-248 (NK) participates in substrate binding.

This sequence belongs to the eIF-2B alpha/beta/delta subunits family. MtnA subfamily.

The enzyme catalyses 5-(methylsulfanyl)-alpha-D-ribose 1-phosphate = 5-(methylsulfanyl)-D-ribulose 1-phosphate. It participates in amino-acid biosynthesis; L-methionine biosynthesis via salvage pathway; L-methionine from S-methyl-5-thio-alpha-D-ribose 1-phosphate: step 1/6. Its function is as follows. Catalyzes the interconversion of methylthioribose-1-phosphate (MTR-1-P) into methylthioribulose-1-phosphate (MTRu-1-P). The chain is Methylthioribose-1-phosphate isomerase from Geobacter sp. (strain M21).